The sequence spans 40 residues: uncharacterized protein (40 aa).

This is an uncharacterized protein from Sulfolobus acidocaldarius (strain ATCC 33909 / DSM 639 / JCM 8929 / NBRC 15157 / NCIMB 11770).